The primary structure comprises 504 residues: Glycerol kinase (504 aa).

Residue threonine 12 participates in ADP binding. ATP is bound by residues threonine 12, threonine 13, and serine 14. Threonine 12 is a binding site for sn-glycerol 3-phosphate. Arginine 16 is a binding site for ADP. Sn-glycerol 3-phosphate is bound by residues arginine 82, glutamate 83, tyrosine 134, and aspartate 246. Glycerol-binding residues include arginine 82, glutamate 83, tyrosine 134, aspartate 246, and glutamine 247. Positions 268 and 312 each coordinate ADP. Residues threonine 268, glycine 312, glutamine 316, and glycine 413 each coordinate ATP. Glycine 413 and asparagine 417 together coordinate ADP.

The protein belongs to the FGGY kinase family.

The enzyme catalyses glycerol + ATP = sn-glycerol 3-phosphate + ADP + H(+). The protein operates within polyol metabolism; glycerol degradation via glycerol kinase pathway; sn-glycerol 3-phosphate from glycerol: step 1/1. With respect to regulation, inhibited by fructose 1,6-bisphosphate (FBP). Its function is as follows. Key enzyme in the regulation of glycerol uptake and metabolism. Catalyzes the phosphorylation of glycerol to yield sn-glycerol 3-phosphate. The sequence is that of Glycerol kinase from Renibacterium salmoninarum (strain ATCC 33209 / DSM 20767 / JCM 11484 / NBRC 15589 / NCIMB 2235).